Reading from the N-terminus, the 302-residue chain is UDP-N-acetylenolpyruvoylglucosamine reductase (302 aa).

Residues 27–192 (KVGGAVDYLA…LSAKFALRPG (166 aa)) form the FAD-binding PCMH-type domain. Arg171 is a catalytic residue. Catalysis depends on Ser221, which acts as the Proton donor. Glu291 is an active-site residue.

This sequence belongs to the MurB family. FAD serves as cofactor.

The protein localises to the cytoplasm. It carries out the reaction UDP-N-acetyl-alpha-D-muramate + NADP(+) = UDP-N-acetyl-3-O-(1-carboxyvinyl)-alpha-D-glucosamine + NADPH + H(+). The protein operates within cell wall biogenesis; peptidoglycan biosynthesis. In terms of biological role, cell wall formation. This is UDP-N-acetylenolpyruvoylglucosamine reductase from Streptococcus suis (strain 98HAH33).